The chain runs to 293 residues: Urease accessory protein UreD (293 aa).

This sequence belongs to the UreD family. In terms of assembly, ureD, UreF and UreG form a complex that acts as a GTP-hydrolysis-dependent molecular chaperone, activating the urease apoprotein by helping to assemble the nickel containing metallocenter of UreC. The UreE protein probably delivers the nickel.

The protein resides in the cytoplasm. Its function is as follows. Required for maturation of urease via the functional incorporation of the urease nickel metallocenter. In Arthrobacter sp. (strain FB24), this protein is Urease accessory protein UreD.